A 634-amino-acid chain; its full sequence is Heat shock 70-related protein 1, mitochondrial (634 aa).

The N-terminal 20 residues, 1–20, are a transit peptide targeting the mitochondrion; that stretch reads MFARRVCGSAAASAACLARH. Positions 538 to 614 form a coiled coil; it reads SEQHAEADRV…AAATDKLQKA (77 aa).

Belongs to the heat shock protein 70 family.

The protein resides in the mitochondrion. The polypeptide is Heat shock 70-related protein 1, mitochondrial (HSP70.1) (Leishmania major).